The primary structure comprises 204 residues: MTGFSNKAIVIDGRGHLLGRLAAVIAKVLLEGNKVVVVRCEQINISGNFFRNKLKFMSFLRKRCNVNPARGPFHFRAPSKILWKTVRGMIPHKTERGKSALRRLRAYDGCPPPYDNRRRVVVPAALRVFCLKPGRKYCHVGRLSHEVGWKYRDVVRKLENKRKVKSVKLMAYEKKLKRITKESGEKVAKTTAPFTAVIQSYGYN.

The protein belongs to the universal ribosomal protein uL13 family.

The protein is Large ribosomal subunit protein uL13 (RpL13A) of Spodoptera frugiperda (Fall armyworm).